Here is a 120-residue protein sequence, read N- to C-terminus: Large ribosomal subunit protein uL18 (120 aa).

This sequence belongs to the universal ribosomal protein uL18 family. Part of the 50S ribosomal subunit; part of the 5S rRNA/L5/L18/L25 subcomplex. Contacts the 5S and 23S rRNAs.

Its function is as follows. This is one of the proteins that bind and probably mediate the attachment of the 5S RNA into the large ribosomal subunit, where it forms part of the central protuberance. This chain is Large ribosomal subunit protein uL18, found in Maricaulis maris (strain MCS10) (Caulobacter maris).